The chain runs to 502 residues: Vicilin Jug r 6.0101 (502 aa).

An N-terminal signal peptide occupies residues M1–A27. The segment covering A67–E84 has biased composition (basic and acidic residues). Residues A67–P100 form a disordered region. Residues G85–P100 show a composition bias toward acidic residues. Cupin type-1 domains follow at residues Y101–E259 and F302–E475. N-linked (GlcNAc...) asparagine glycosylation is present at N340. The tract at residues H374–Q401 is disordered. Residues S376–S389 are compositionally biased toward low complexity.

This sequence belongs to the 7S seed storage protein family. As to quaternary structure, homotrimer. In terms of processing, N-glycosylated; paucimannose-type structures containing xylose. As to expression, expressed in seed (at protein level).

Functionally, seed storage protein. The sequence is that of Vicilin Jug r 6.0101 from Juglans regia (English walnut).